Here is a 666-residue protein sequence, read N- to C-terminus: tRNA 5-methylaminomethyl-2-thiouridine biosynthesis bifunctional protein MnmC (666 aa).

Residues 1–253 (MSSPFVPIIT…KRHMICAHYE (253 aa)) form a tRNA (mnm(5)s(2)U34)-methyltransferase region. Positions 283–666 (VGGGLAGCFI…FLRKKIIQGP (384 aa)) are FAD-dependent cmnm(5)s(2)U34 oxidoreductase.

It in the N-terminal section; belongs to the methyltransferase superfamily. tRNA (mnm(5)s(2)U34)-methyltransferase family. In the C-terminal section; belongs to the DAO family. The cofactor is FAD.

It is found in the cytoplasm. It catalyses the reaction 5-aminomethyl-2-thiouridine(34) in tRNA + S-adenosyl-L-methionine = 5-methylaminomethyl-2-thiouridine(34) in tRNA + S-adenosyl-L-homocysteine + H(+). In terms of biological role, catalyzes the last two steps in the biosynthesis of 5-methylaminomethyl-2-thiouridine (mnm(5)s(2)U) at the wobble position (U34) in tRNA. Catalyzes the FAD-dependent demodification of cmnm(5)s(2)U34 to nm(5)s(2)U34, followed by the transfer of a methyl group from S-adenosyl-L-methionine to nm(5)s(2)U34, to form mnm(5)s(2)U34. The chain is tRNA 5-methylaminomethyl-2-thiouridine biosynthesis bifunctional protein MnmC from Legionella pneumophila (strain Lens).